We begin with the raw amino-acid sequence, 213 residues long: Sclerostin (213 aa).

A signal peptide spans 1 to 28 (MQLSLAPCLACLLVHAAFVAVESQGWQA). N53 carries an N-linked (GlcNAc...) asparagine glycan. Disulfide bonds link C80-C134, C94-C148, C105-C165, and C109-C167. In terms of domain architecture, CTCK spans 82-172 (ELHYTRFVTD…ASCKCKRLTR (91 aa)). N175 carries N-linked (GlcNAc...) asparagine glycosylation. Positions 178–213 (ELKDFGPETARPQKGRKPRPRARGAKANQAELENAY) are disordered. Residues 190–201 (QKGRKPRPRARG) are compositionally biased toward basic residues.

The protein belongs to the sclerostin family. In terms of assembly, interacts with LRP4 (via the extracellular domain); the interaction facilitates the inhibition of Wnt signaling. Interacts with LRP5 (via the first two YWTD-EGF repeat domains); the interaction inhibits Wnt-mediated signaling. Interacts with LRP6.

It is found in the secreted. In terms of biological role, negative regulator of bone growth that acts through inhibition of Wnt signaling and bone formation. This chain is Sclerostin, found in Rattus norvegicus (Rat).